We begin with the raw amino-acid sequence, 632 residues long: MGWASFNLTWAWFLPVIVYGALPLLRLPQQTQAKTELFLTALSVLFMFISATVYKISMGYSVIVLLVGYTALATLSLAKLKVMQGDKFIIASLLCIILLIFFFIVYPTLAIFVSMFYDGDTFAPQQVMRILTQSYIVRVITNSLFLSGFVGIVSTVFGLAFALYTTRIARRTAFIGKIFSILPIVTPPFVVGLGVTLMLGRSGYVTEFLSTNFGFSSHNWLYGFNGIAIAQILAFAPISFMILDGALKSVHPSIEEASYTLRANRYQTFYQIIFPLLRPALANSFLIVFIQSLADFSNPLVLGGSFDVIATQIYFYIAGSQLDYASASTLGSMLLIFSLAIFIIQYIWIGNRSYVTVSGKSYRGDVQELPNGLKYTIIGMLGFWVIFNMALYGSIFYGSFTVNWGVNYTLTLKNYAMLFGQGLSDGAWPSLINTLIYAGIAAPLTAFFGLLIAYIVVRKDFQGKKSLEFLTMLCFAVPGTVAGVSYILAFNNAPLYITGTGIIVIISMVMRDLPIGMRAAIAGLGQLDKSLDEASLSLKGSSWKTLCFIVLPLLKPALLSALVTSFVRAMTTVSAIIFLVTADTRVYRIYFKSCGRRRIRHCDCIRFYFNCCDDGNYFVFRLDCRRYAYFPF.

The next 15 helical transmembrane spans lie at 5–25 (SFNL…LPLL), 37–57 (LFLT…YKIS), 58–78 (MGYS…LSLA), 93–113 (LLCI…AIFV), 144–164 (LFLS…FALY), 178–198 (IFSI…VTLM), 223–243 (GFNG…FMIL), 270–290 (YQII…IVFI), 299–319 (PLVL…YIAG), 330–350 (LGSM…IWIG), 377–397 (IIGM…SIFY), 436–456 (IYAG…AYIV), 469–489 (FLTM…YILA), 490–510 (FNNA…SMVM), and 547–567 (CFIV…TSFV). Residues 140–345 (ITNSLFLSGF…IFSLAIFIIQ (206 aa)) form the ABC transmembrane type-1 1 domain. The 202-residue stretch at 431 to 632 (LINTLIYAGI…DCRRYAYFPF (202 aa)) folds into the ABC transmembrane type-1 2 domain.

The protein belongs to the binding-protein-dependent transport system permease family. FbpB subfamily. In terms of assembly, the complex is composed of two ATP-binding proteins (FbpC), two transmembrane proteins (FbpB) and a solute-binding protein (FbpA).

The protein resides in the cell inner membrane. Its function is as follows. Part of the ABC transporter complex FbpABC (TC 3.A.1.10.1) involved in Fe(3+) ions import. Probably responsible for the translocation of the substrate across the membrane. The protein is Putative ferric transport system permease protein FbpB 1 (fbpB1) of Haemophilus influenzae (strain ATCC 51907 / DSM 11121 / KW20 / Rd).